Consider the following 138-residue polypeptide: MGQMTVQIVTPDGIKYDHHAAFVLVKTVDGEMGVYSGHEELIAVLEIGEMKVRRVDDENHVDWIAVNGGIIEVNKDIITVISDSAERERDIDISRAERAKLRAERELEEAQTARNIDMEMRATVALQRAINRIRVGKH.

This sequence belongs to the ATPase epsilon chain family. F-type ATPases have 2 components, CF(1) - the catalytic core - and CF(0) - the membrane proton channel. CF(1) has five subunits: alpha(3), beta(3), gamma(1), delta(1), epsilon(1). CF(0) has three main subunits: a, b and c.

The protein localises to the cell membrane. Produces ATP from ADP in the presence of a proton gradient across the membrane. In Streptococcus suis (strain 98HAH33), this protein is ATP synthase epsilon chain.